A 277-amino-acid polypeptide reads, in one-letter code: 4-hydroxy-tetrahydrodipicolinate reductase (277 aa).

NAD(+) is bound by residues 11–16 (GALGRM) and 110–112 (GTT). The Proton donor/acceptor role is filled by His166. His167 is a (S)-2,3,4,5-tetrahydrodipicolinate binding site. Lys170 functions as the Proton donor in the catalytic mechanism. Position 176-177 (176-177 (GT)) interacts with (S)-2,3,4,5-tetrahydrodipicolinate.

It belongs to the DapB family.

The protein resides in the cytoplasm. The catalysed reaction is (S)-2,3,4,5-tetrahydrodipicolinate + NAD(+) + H2O = (2S,4S)-4-hydroxy-2,3,4,5-tetrahydrodipicolinate + NADH + H(+). The enzyme catalyses (S)-2,3,4,5-tetrahydrodipicolinate + NADP(+) + H2O = (2S,4S)-4-hydroxy-2,3,4,5-tetrahydrodipicolinate + NADPH + H(+). The protein operates within amino-acid biosynthesis; L-lysine biosynthesis via DAP pathway; (S)-tetrahydrodipicolinate from L-aspartate: step 4/4. Functionally, catalyzes the conversion of 4-hydroxy-tetrahydrodipicolinate (HTPA) to tetrahydrodipicolinate. The protein is 4-hydroxy-tetrahydrodipicolinate reductase of Parasynechococcus marenigrum (strain WH8102).